Reading from the N-terminus, the 374-residue chain is D-amino-acid oxidase 3 (374 aa).

Positions 1-19 are cleaved as a signal peptide; sequence MVKYDAIILGSGVLGLSIA. FAD contacts are provided by serine 11, leucine 14, lysine 34, aspartate 35, alanine 46, serine 47, and glycine 51. Asparagine 180 carries an N-linked (GlcNAc...) asparagine glycan. A disulfide bridge links cysteine 214 with cysteine 271. (R)-lactate is bound by residues tyrosine 229, tyrosine 246, and arginine 296. 3 residues coordinate anthranilate: tyrosine 229, tyrosine 246, and arginine 296. The FAD site is built by arginine 296, glycine 342, glycine 345, tyrosine 346, and glutamine 347. Positions 372–374 match the Microbody targeting signal motif; it reads AKL.

It belongs to the DAMOX/DASOX family. It depends on FAD as a cofactor.

The protein resides in the peroxisome matrix. It carries out the reaction a D-alpha-amino acid + O2 + H2O = a 2-oxocarboxylate + H2O2 + NH4(+). In terms of biological role, catalyzes the oxidative deamination of D-amino acids with broad substrate specificity. Enables the organism to utilize D-amino acids as a source of nutrients. Enables the organism to utilize D-asparate and D-glutamate as a nitrogen source and may also contribute to utlization of D-tryptophan, D-tyrosine and D-asparagine as a nitrogen source. Protects the organism from the toxicity of D-amino acids, including from D-glutamate. May play a role in its interaction with the host. The chain is D-amino-acid oxidase 3 from Cryptococcus deuterogattii (strain R265) (Cryptococcus gattii VGII (strain R265)).